Here is a 180-residue protein sequence, read N- to C-terminus: Secreted RxLR effector protein 5 (180 aa).

An N-terminal signal peptide occupies residues 1 to 24 (MRFYYTLLATAAALLVHSDALSAA). Residues 44-60 (RFLRRHTDSETTDNEER) carry the RxLR-dEER motif.

This sequence belongs to the RxLR effector family.

It is found in the secreted. It localises to the host cell. Functionally, secreted effector that partially suppresses elicitor-induced cell death in host and enhances virulence of P.parasitica. In Phytophthora nicotianae (Potato buckeye rot agent), this protein is Secreted RxLR effector protein 5.